We begin with the raw amino-acid sequence, 67 residues long: MNAQELRSKTPDQLRDQLVALKKEAFNLRFQQATGQLENTARMRAVRRDVARIKTVLNEMAASAAAN.

It belongs to the universal ribosomal protein uL29 family.

This chain is Large ribosomal subunit protein uL29, found in Cereibacter sphaeroides (strain ATCC 17025 / ATH 2.4.3) (Rhodobacter sphaeroides).